The primary structure comprises 154 residues: Large ribosomal subunit protein uL13 (154 aa).

Belongs to the universal ribosomal protein uL13 family. In terms of assembly, part of the 50S ribosomal subunit.

In terms of biological role, this protein is one of the early assembly proteins of the 50S ribosomal subunit, although it is not seen to bind rRNA by itself. It is important during the early stages of 50S assembly. This Rhizobium etli (strain ATCC 51251 / DSM 11541 / JCM 21823 / NBRC 15573 / CFN 42) protein is Large ribosomal subunit protein uL13.